Here is a 184-residue protein sequence, read N- to C-terminus: NADH-quinone oxidoreductase subunit B (184 aa).

[4Fe-4S] cluster contacts are provided by Cys-37, Cys-38, Cys-103, and Cys-132.

This sequence belongs to the complex I 20 kDa subunit family. NDH-1 is composed of 14 different subunits. Subunits NuoB, C, D, E, F, and G constitute the peripheral sector of the complex. [4Fe-4S] cluster is required as a cofactor.

It is found in the cell membrane. It catalyses the reaction a quinone + NADH + 5 H(+)(in) = a quinol + NAD(+) + 4 H(+)(out). NDH-1 shuttles electrons from NADH, via FMN and iron-sulfur (Fe-S) centers, to quinones in the respiratory chain. The immediate electron acceptor for the enzyme in this species is believed to be a menaquinone. Couples the redox reaction to proton translocation (for every two electrons transferred, four hydrogen ions are translocated across the cytoplasmic membrane), and thus conserves the redox energy in a proton gradient. This chain is NADH-quinone oxidoreductase subunit B, found in Mycobacterium sp. (strain JLS).